The following is a 1049-amino-acid chain: Toll-like receptor 7 (1049 aa).

Positions 1-26 (MVFPMWTLKRQILILFNIILISKLLG) are cleaved as a signal peptide. Over 27 to 839 (ARWFPKTLPC…LYTCELDLTN (813 aa)) the chain is Extracellular. 6 LRR repeats span residues 43 to 64 (PKNHVIVDCTDKHLTEIPGGIP), 65 to 87 (TNTTNLTLTINHIPDISPASFHR), 110 to 126 (NMCIKRLQIKPRSFSGL), 127 to 149 (TYLKSLYLDGNQLLEIPQGLPPS), 151 to 170 (QLLSLEANNIFSIRKENLTE), and 171 to 195 (LANIEILYLGQNCYYRNPCYVSYSI). 2 N-linked (GlcNAc...) asparagine glycosylation sites follow: Asn66 and Asn69. Asn167 is a glycosylation site (N-linked (GlcNAc...) asparagine). Residues Asn202 and Asn215 are each glycosylated (N-linked (GlcNAc...) asparagine). LRR repeat units lie at residues 203–226 (LTKLKVLSLKDNNVTAVPTVLPST), 228–247 (TELYLYNNMIAKIQEDDFNN), 248–275 (LNQLQILDLSGNCPRCYNAPFPCAPCKN), 289–312 (LTELKVLRLHSNSLQHVPPRWFKN), 314–337 (NKLQELDLSQNFLAKEIGDAKFLH), 339–368 (LPSLIQLDLSFNFELQVYRASMNLSQAFSS), 369–392 (LKSLKILRIRGYVFKELKSFNLSP), 396–419 (LQNLEVLDLGTNFIKIANLSMFKQ), and 421–443 (KRLKVIDLSVNKISPSGDSSEVG). Asn361 carries N-linked (GlcNAc...) asparagine glycosylation. N-linked (GlcNAc...) asparagine glycosylation is present at Asn413. N-linked (GlcNAc...) asparagine glycosylation occurs at Asn488. 4 LRR repeats span residues 492–515 (YKYGQTLDLSKNSIFFVKSSDFQH), 516–540 (LSFLKCLNLSGNLISQTLNGSEFQP), 541–564 (LAELRYLDFSNNRLDLLHSTAFEE), and 566–588 (HKLEVLDISSNSHYFQSEGITHM). N-linked (GlcNAc...) asparagine glycosylation is found at Asn523 and Asn534. A glycan (N-linked (GlcNAc...) asparagine) is linked at Asn590. LRR repeat units follow at residues 595 to 618 (LKVLQKLMMNDNDISSSTSRTMES), 619 to 644 (ESLRTLEFRGNHLDVLWREGDNRYLQ), 649 to 672 (LLKLEELDISKNSLSFLPSGVFDG), 674 to 697 (PPNLKNLSLAKNGLKSFSWKKLQC), 698 to 721 (LKNLETLDLSHNQLTTVPERLSNC), 723 to 745 (RSLKNLILKNNQIRSLTKYFLQD), 746 to 769 (AFQLRYLDLSSNKIQMIQKTSFPE), and 772 to 795 (LNNLKMLLLHHNRFLCTCDAVWFV). N-linked (GlcNAc...) asparagine glycosylation is found at Asn679 and Asn720. Residue Asn799 is glycosylated (N-linked (GlcNAc...) asparagine). Residues 840–860 (LILFSLSISVSLFLMVMMTAS) traverse the membrane as a helical segment. The Cytoplasmic portion of the chain corresponds to 861–1049 (HLYFWDVWYI…AYSQVFKETV (189 aa)). The region spanning 889–1033 (CCYDAFIVYD…YFWQCLKNAL (145 aa)) is the TIR domain.

The protein belongs to the Toll-like receptor family. As to quaternary structure, homodimer. Interacts with MYD88 via their respective TIR domains. Interacts with UNC93B1. Interacts with SMPDL3B. Detected in brain, placenta, spleen, stomach, small intestine, lung and in plasmacytoid pre-dendritic cells. Expressed in peripheral mononuclear blood cells.

The protein localises to the endoplasmic reticulum membrane. It is found in the endosome. Its subcellular location is the lysosome. It localises to the cytoplasmic vesicle. The protein resides in the phagosome. Activated by guanosine analogs including deoxyguanosine, 7-thia-8-oxoguanosine or 7-deazaguanosine in a RNA-independent manner. Activated by imiquimod. Functionally, endosomal receptor that plays a key role in innate and adaptive immunity. Controls host immune response against pathogens through recognition of uridine-containing single strand RNAs (ssRNAs) of viral origin or guanosine analogs. Upon binding to agonists, undergoes dimerization that brings TIR domains from the two molecules into direct contact, leading to the recruitment of TIR-containing downstream adapter MYD88 through homotypic interaction. In turn, the Myddosome signaling complex is formed involving IRAK4, IRAK1, TRAF6, TRAF3 leading to activation of downstream transcription factors NF-kappa-B and IRF7 to induce pro-inflammatory cytokines and interferons, respectively. In plasmacytoid dendritic cells, RNASET2 endonuclease cooperates with PLD3 or PLD4 5'-&gt;3' exonucleases to process RNA and release 2',3'-cyclic guanosine monophosphate (2',3'-cGMP) and cytidine-rich RNA fragments that occupy TLR7 ligand-binding pockets and trigger a signaling-competent state. This chain is Toll-like receptor 7, found in Homo sapiens (Human).